The sequence spans 454 residues: Sensor histidine kinase RppB (454 aa).

Topologically, residues 1–13 (MNTRRLFARSRLQ) are periplasmic. The helical transmembrane segment at 14–34 (LAFWYALVMGGILTLLGLGVY) threads the bilayer. The Cytoplasmic segment spans residues 35–186 (RAIVQANWMA…LAAFDAENKR (152 aa)). A helical membrane pass occupies residues 187–207 (ILWILGLSFPIALGLVAFSSW). The Periplasmic segment spans residues 208–454 (GLAGLAMRPI…PIFSVPIVHS (247 aa)). One can recognise a Histidine kinase domain in the interval 230-448 (NAAHELRSPL…LFTIQLPIFS (219 aa)). A Phosphohistidine; by autocatalysis modification is found at His233.

The protein resides in the cell inner membrane. The catalysed reaction is ATP + protein L-histidine = ADP + protein N-phospho-L-histidine.. In terms of biological role, member of two-component regulatory system RppA/RppB, involved in the establishment of the appropriate stoichiometry between the 2 photosystems. It senses changes in the plastoquinone (PQ) redox poise. Another group shows this two-component pair, renamed NrsR/NrsS, controls the nickel-dependent expression of the nrsBACD operon; they suggest the photosystem-related activities seen earlier are due to the expression of NrsS (RppB) in the absence of its natural substrate NrsR (RppA). The chain is Sensor histidine kinase RppB from Synechocystis sp. (strain ATCC 27184 / PCC 6803 / Kazusa).